The chain runs to 89 residues: MAASSRAQVLRLYRALLRESQRFSSYNYRTYAIRRIRDAFRENKNIADSEKIEELLNKAKANLEVIQRQGTIDHMYATEKLIIERPGNT.

The stretch at 44–71 forms a coiled coil; the sequence is KNIADSEKIEELLNKAKANLEVIQRQGT.

The protein belongs to the complex I LYR family.

The protein localises to the mitochondrion. It localises to the nucleus. It functions in the pathway cofactor biosynthesis; iron-sulfur cluster biosynthesis. Functionally, required for nuclear and mitochondrial iron-sulfur protein biosynthesis. The protein is LYR motif-containing protein 4 (LYRM4) of Taeniopygia guttata (Zebra finch).